We begin with the raw amino-acid sequence, 307 residues long: MTTDAPLPAPGREVHTLDALDSAQAESVLALLSEAARSDGRQAVSEQGRLRIRGGHRDGVRHFLLTVDGALAGYAQLEDTDPVEAPAAELVVHPDRRGHGHGRALGAALLAATGKRLRVWAHGGSSAARHLAQVLGLSLFRELRQLRRSLVPLDLAEPVLPEGVTVRTFEPGRDDAAWLAVNRAAFAHHPEQGSLTQQDLDDRKAEPWFDPKGFFLAERDGEIVGFHWTKVHAEERLGEVYVVGVLPEAQGGGLGKALTSIGLHHLAAEALPTAMLYVDADNTAAVTVYERMGFTTHEVDLMYRTES.

N-acetyltransferase domains are found at residues 15-158 and 164-307; these read HTLD…LAEP and VTVR…RTES. Residue glutamate 46 participates in 1D-myo-inositol 2-(L-cysteinylamino)-2-deoxy-alpha-D-glucopyranoside binding. 90-92 contributes to the acetyl-CoA binding site; sequence LVV. 1D-myo-inositol 2-(L-cysteinylamino)-2-deoxy-alpha-D-glucopyranoside contacts are provided by glutamate 191, lysine 230, and glutamate 239. Residues 243-245 and 250-256 each bind acetyl-CoA; these read VGV and QGGGLGK. Tyrosine 277 is a 1D-myo-inositol 2-(L-cysteinylamino)-2-deoxy-alpha-D-glucopyranoside binding site.

The protein belongs to the acetyltransferase family. MshD subfamily. In terms of assembly, monomer.

It carries out the reaction 1D-myo-inositol 2-(L-cysteinylamino)-2-deoxy-alpha-D-glucopyranoside + acetyl-CoA = mycothiol + CoA + H(+). Catalyzes the transfer of acetyl from acetyl-CoA to desacetylmycothiol (Cys-GlcN-Ins) to form mycothiol. The protein is Mycothiol acetyltransferase of Streptomyces griseus subsp. griseus (strain JCM 4626 / CBS 651.72 / NBRC 13350 / KCC S-0626 / ISP 5235).